A 476-amino-acid polypeptide reads, in one-letter code: Eukaryotic translation initiation factor 3 subunit L (476 aa).

Positions 257-452 constitute a PCI domain; sequence DAIRMFSHIL…DLDYALEKDL (196 aa).

The protein belongs to the eIF-3 subunit L family. As to quaternary structure, component of the eukaryotic translation initiation factor 3 (eIF-3) complex.

The protein resides in the cytoplasm. In terms of biological role, component of the eukaryotic translation initiation factor 3 (eIF-3) complex, which is involved in protein synthesis of a specialized repertoire of mRNAs and, together with other initiation factors, stimulates binding of mRNA and methionyl-tRNAi to the 40S ribosome. The eIF-3 complex specifically targets and initiates translation of a subset of mRNAs involved in cell proliferation. This Aspergillus terreus (strain NIH 2624 / FGSC A1156) protein is Eukaryotic translation initiation factor 3 subunit L.